The following is a 238-amino-acid chain: MKIDILTLFPEMFAPLESSIVGKAVEKGLLDIRYHNFRDNAEKARHVDDEPYGGGQGMLLRAQPIYDTIDKIDANNPRVILLDPAGKTFNQSYAEELAQEDELIFICGHYEGYDERIKQLVTDEISLGDFVLTGGELAAMTMVDATVRLIPNVIGKEASHQDDSFSSGLLEYPQYTRPYDFRGMTVPDVLMSGHHENIRRWRLEESLRKTYLRRPDLLEKYPLNQEESDLLAKIKEEM.

Residues glycine 108 and 127 to 132 (LGDFVL) contribute to the S-adenosyl-L-methionine site.

The protein belongs to the RNA methyltransferase TrmD family. As to quaternary structure, homodimer.

Its subcellular location is the cytoplasm. It carries out the reaction guanosine(37) in tRNA + S-adenosyl-L-methionine = N(1)-methylguanosine(37) in tRNA + S-adenosyl-L-homocysteine + H(+). Functionally, specifically methylates guanosine-37 in various tRNAs. This is tRNA (guanine-N(1)-)-methyltransferase from Streptococcus uberis (strain ATCC BAA-854 / 0140J).